The following is an 806-amino-acid chain: Ent-atiserene synthase KSL4, chloroplastic (806 aa).

The N-terminal 75 residues, 1–75, are a transit peptide targeting the chloroplast; the sequence is MGIVALILIK…AKLFKKNEVC (75 aa). The interval 33–56 is disordered; sequence ASLAGSGLPKTTPPKTASLQSHSP. Over residues 45-55 the composition is skewed to polar residues; sequence PPKTASLQSHS. 4 residues coordinate Mg(2+): D556, D560, N700, and E708. Positions 556–560 match the DDXXD motif motif; the sequence is DDLFD.

Belongs to the terpene synthase family. Mg(2+) is required as a cofactor. As to expression, highly expressed in leaves, and, at low levels, in roots, stems and flowers.

It localises to the plastid. The protein localises to the chloroplast. It carries out the reaction ent-copalyl diphosphate = ent-atiserene + diphosphate. Its pathway is secondary metabolite biosynthesis; terpenoid biosynthesis. Its function is as follows. Involved in the biosynthesis of ent-kaurene diterpenoids natural products such as oridonin, miltiradiene, eriocalyxin B and nezukol, known to exhibit antitumor, anti-inflammatory and antibacterial activities. Catalyzes the conversion of ent-copalyl diphosphate (ent-CPP) to ent-atiserene. This is Ent-atiserene synthase KSL4, chloroplastic from Isodon rubescens (Rabdosia rubescens).